Consider the following 248-residue polypeptide: Pulmonary surfactant-associated protein A (248 aa).

Residues 1 to 20 (MLLCSLTLTLLWMVASGLEC) form the signal peptide. A Collagen-like domain is found at 28-100 (GSPGIPGTPG…PGERGPPGFP (73 aa)). The interval 29–102 (SPGIPGTPGS…ERGPPGFPAY (74 aa)) is disordered. 4-hydroxyproline occurs at positions 30, 33, 36, 42, 54, 57, 63, 67, and 70. The span at 42 to 51 (PGRDGRDGIK) shows a compositional bias: basic and acidic residues. A compositionally biased stretch (pro residues) spans 54-65 (PGPPGPMGPPGG). Low complexity predominate over residues 69-82 (LPGRDGMTGAPGLP). Over residues 84–93 (ERGEKGEPGE) the composition is skewed to basic and acidic residues. Residues 132-248 (LAVGEKVFST…LQYRLAICEF (117 aa)) form the C-type lectin domain. Disulfide bonds link cysteine 155–cysteine 246 and cysteine 224–cysteine 238. N-linked (GlcNAc...) asparagine glycosylation occurs at asparagine 207. Ca(2+) contacts are provided by glutamate 215, arginine 217, asparagine 234, and aspartate 235.

The protein belongs to the SFTPA family. In terms of assembly, oligomeric complex of 6 set of homotrimers.

Its subcellular location is the secreted. It localises to the extracellular space. The protein resides in the extracellular matrix. It is found in the surface film. In presence of calcium ions, it binds to surfactant phospholipids and contributes to lower the surface tension at the air-liquid interface in the alveoli of the mammalian lung and is essential for normal respiration. Enhances the expression of MYO18A/SP-R210 on alveolar macrophages. The protein is Pulmonary surfactant-associated protein A (SFTPA1) of Bos taurus (Bovine).